A 92-amino-acid chain; its full sequence is Large ribosomal subunit protein eL37 (92 aa).

The Zn(2+) site is built by cysteine 19, cysteine 22, cysteine 34, and cysteine 37. The C4-type zinc finger occupies 19 to 37; the sequence is CRRCGRRSYHIQKSTCANC. The disordered stretch occupies residues 50–92; the sequence is SEKAKRRKTTGSGRTAHLRDVHRRFKNGFQVGTPKGARGPENH.

The protein belongs to the eukaryotic ribosomal protein eL37 family. It depends on Zn(2+) as a cofactor.

Its function is as follows. Binds to the 23S rRNA. The protein is Large ribosomal subunit protein eL37 (rpl37) of Emericella nidulans (strain FGSC A4 / ATCC 38163 / CBS 112.46 / NRRL 194 / M139) (Aspergillus nidulans).